Here is a 47-residue protein sequence, read N- to C-terminus: Large ribosomal subunit protein eL40 (47 aa).

It belongs to the eukaryotic ribosomal protein eL40 family.

This is Large ribosomal subunit protein eL40 from Methanococcus aeolicus (strain ATCC BAA-1280 / DSM 17508 / OCM 812 / Nankai-3).